Reading from the N-terminus, the 244-residue chain is Securin-like protein (244 aa).

The interval 31–53 (ELEKTPSRGGLGLVVNSSKTPGG) is disordered.

In terms of assembly, forms a complex (via C-terminus) with separase sep-1. Interaction with ify-1 stabilizes sep-1. Also maintains the complex in the cytoplasm during interphase and recruits it to chromosomes during the first meiotic division. Interacts with E3 ubiquitin-protein ligase etc-1. In terms of processing, ubiquitinated by etc-1 likely at the onset of anaphase, resulting in its degradation. As to expression, expressed in germ cells including oocytes.

It is found in the cytoplasm. The protein localises to the chromosome. It localises to the cytoskeleton. Its subcellular location is the spindle. Its function is as follows. Acts as a chaperone and as an inhibitor for separase sep-1. Plays an essential role in maintaining chromosome cohesion prior to meiotic and mitotic anaphase, in cytokinesis and in organizing the spindle and the centrosome. Ubiquitination-dependent degradation at the onset of anaphase is likely to activate sep-1 resulting in the proteolysis of the cohesin complex and the subsequent segregation of the chromosomes. Also required for cortical granule exocytosis. The polypeptide is Securin-like protein (Caenorhabditis elegans).